Here is a 254-residue protein sequence, read N- to C-terminus: 5-keto-D-gluconate 5-reductase (254 aa).

Residue 13–37 (LITGSAQGIGFLLATGLGKYGAQII) participates in NADP(+) binding. A substrate-binding site is contributed by S145. The active-site Proton acceptor is the Y158.

It belongs to the short-chain dehydrogenases/reductases (SDR) family.

The catalysed reaction is D-gluconate + NAD(+) = 5-dehydro-D-gluconate + NADH + H(+). The enzyme catalyses D-gluconate + NADP(+) = 5-dehydro-D-gluconate + NADPH + H(+). It participates in carbohydrate acid metabolism; L-idonate degradation. Its function is as follows. Catalyzes the reduction of 5-keto-D-gluconate to D-gluconate, using either NADH or NADPH. Is likely involved in an L-idonate degradation pathway that allows E.coli to utilize L-idonate as the sole carbon and energy source. Is also able to catalyze the reverse reaction in vitro, but the D-gluconate oxidation by the enzyme can only proceed with NAD. The protein is 5-keto-D-gluconate 5-reductase of Escherichia coli O6:H1 (strain CFT073 / ATCC 700928 / UPEC).